Reading from the N-terminus, the 1028-residue chain is Exportin-T (1028 aa).

Belongs to the exportin family.

The protein localises to the nucleus. It is found in the cytoplasm. TRNA nucleus export receptor which facilitates tRNA translocation across the nuclear pore complex. Involved in pre-tRNA splicing, probably by affecting the interaction of pre-tRNA with splicing endonuclease. This chain is Exportin-T (los1), found in Aspergillus terreus (strain NIH 2624 / FGSC A1156).